A 118-amino-acid polypeptide reads, in one-letter code: UPF0102 protein Franean1_1156 (118 aa).

This sequence belongs to the UPF0102 family.

The sequence is that of UPF0102 protein Franean1_1156 from Parafrankia sp. (strain EAN1pec).